We begin with the raw amino-acid sequence, 131 residues long: MSESENTEKRWGVAHVHASFNNTLITVTDLTGAETIVKSSGGAVVKQNRDEASPYAAMQMAESVAEDIKAAGIDGLHVRVRGPGGNGNKSPGPGAQATIRALARAGLEIGRIEDVTPIPHDGTRAPKNSRL.

This sequence belongs to the universal ribosomal protein uS11 family. As to quaternary structure, part of the 30S ribosomal subunit.

Located on the platform of the 30S subunit. This Haloquadratum walsbyi (strain DSM 16790 / HBSQ001) protein is Small ribosomal subunit protein uS11.